The primary structure comprises 571 residues: Medium/long-chain-fatty-acid--CoA ligase FadD8 (571 aa).

The segment at 1 to 22 (MSTAGDDAVGVPPACGGRSDAV) is disordered.

This sequence belongs to the ATP-dependent AMP-binding enzyme family.

The enzyme catalyses a medium-chain fatty acid + ATP + CoA = a medium-chain fatty acyl-CoA + AMP + diphosphate. The catalysed reaction is a long-chain fatty acid + ATP + CoA = a long-chain fatty acyl-CoA + AMP + diphosphate. It catalyses the reaction hexanoate + ATP + CoA = hexanoyl-CoA + AMP + diphosphate. It carries out the reaction dodecanoate + ATP + CoA = dodecanoyl-CoA + AMP + diphosphate. The enzyme catalyses hexadecanoate + ATP + CoA = hexadecanoyl-CoA + AMP + diphosphate. Its pathway is lipid metabolism; fatty acid metabolism. Catalyzes the activation of medium/long-chain fatty acids as acyl-coenzyme A (acyl-CoA). The chain is Medium/long-chain-fatty-acid--CoA ligase FadD8 from Mycobacterium tuberculosis (strain ATCC 25618 / H37Rv).